The sequence spans 440 residues: Ribosomal protein uS12 methylthiotransferase RimO (440 aa).

The MTTase N-terminal domain occupies 5-116; that stretch reads PTIAISHLGC…IVSVIERAEQ (112 aa). Residues cysteine 14, cysteine 50, cysteine 79, cysteine 154, cysteine 158, and cysteine 161 each contribute to the [4Fe-4S] cluster site. The 231-residue stretch at 140-370 folds into the Radical SAM core domain; the sequence is TTTEGVAYLR…ALQQPISWRK (231 aa). The region spanning 372–438 is the TRAM domain; the sequence is QQEVGKTVEV…EYDLFGQVVS (67 aa).

The protein belongs to the methylthiotransferase family. RimO subfamily. Requires [4Fe-4S] cluster as cofactor.

It localises to the cytoplasm. The catalysed reaction is L-aspartate(89)-[ribosomal protein uS12]-hydrogen + (sulfur carrier)-SH + AH2 + 2 S-adenosyl-L-methionine = 3-methylsulfanyl-L-aspartate(89)-[ribosomal protein uS12]-hydrogen + (sulfur carrier)-H + 5'-deoxyadenosine + L-methionine + A + S-adenosyl-L-homocysteine + 2 H(+). In terms of biological role, catalyzes the methylthiolation of an aspartic acid residue of ribosomal protein uS12. The protein is Ribosomal protein uS12 methylthiotransferase RimO of Nostoc sp. (strain PCC 7120 / SAG 25.82 / UTEX 2576).